The sequence spans 61 residues: Aerolysin regulatory protein (61 aa).

The span at 1-14 shows a compositional bias: basic residues; the sequence is MMIKRHLPQPRHRE. Residues 1 to 61 are disordered; it reads MMIKRHLPQP…GQTHTGPQIR (61 aa). Positions 51–61 are enriched in polar residues; sequence DGQTHTGPQIR.

Regulation of the expression of aerolysin. This chain is Aerolysin regulatory protein (aerC), found in Aeromonas sobria.